The chain runs to 538 residues: Succinyl-CoA:acetate CoA-transferase (538 aa).

305-309 (GVGSV) contacts CoA. The active-site 5-glutamyl coenzyme A thioester intermediate is Glu-330. Residues Asn-420 and Gly-424 each coordinate CoA.

The protein belongs to the acetyl-CoA hydrolase/transferase family.

The catalysed reaction is succinyl-CoA + acetate = succinate + acetyl-CoA. Forms succinyl-CoA from succinate and acetyl-CoA. This is Succinyl-CoA:acetate CoA-transferase from Clostridium kluyveri (strain ATCC 8527 / DSM 555 / NBRC 12016 / NCIMB 10680 / K1).